The following is a 365-amino-acid chain: Putative fatty acid elongase 2 (365 aa).

At 1 to 68 (MPDSPTLHHN…SFEFIVNKTR (68 aa)) the chain is on the lumenal side. Asn17 and Asn65 each carry an N-linked (GlcNAc...) asparagine glycan. Residues 69–89 (FSSAPVVATIIISYYLLILVG) traverse the membrane as a helical segment. Residues 90–111 (GRIMRNRQPIRLQKIFQYYNLT) lie on the Cytoplasmic side of the membrane. The chain crosses the membrane as a helical span at residues 112-132 (FSIASAILALLIFEQVAPAIY). Residues 133-149 (KHGFFFSICNEKAWTQP) are Lumenal-facing. A helical membrane pass occupies residues 150–170 (LVFLYYCAYISKFLELTDTFF). Topologically, residues 171-179 (LVLRKKPLQ) are cytoplasmic. A helical membrane pass occupies residues 180–198 (FLHCYHHGATAVLVYTQIV). The Lumenal portion of the chain corresponds to 199-204 (GRTSIS). Residues 205–225 (WLIIEINLLVHVTMYYYYYLV) traverse the membrane as a helical segment. The Cytoplasmic portion of the chain corresponds to 226–241 (AKGIRVPWKKWVTRFQ). The chain crosses the membrane as a helical span at residues 242 to 262 (IVQFFADLGFIYFAVYTEVAY). Residues 263-278 (RLKFYKACMGHCSGHP) are Lumenal-facing. A helical membrane pass occupies residues 279–299 (LAAFCGLATISSYLVLFIVFY). Topologically, residues 300–365 (HNTYKKNAAL…PISSGLNNEK (66 aa)) are cytoplasmic.

This sequence belongs to the ELO family.

The protein resides in the endoplasmic reticulum membrane. It catalyses the reaction a very-long-chain acyl-CoA + malonyl-CoA + H(+) = a very-long-chain 3-oxoacyl-CoA + CO2 + CoA. Its function is as follows. May be involved in the synthesis of very long chain fatty acids. The chain is Putative fatty acid elongase 2 from Schizosaccharomyces pombe (strain 972 / ATCC 24843) (Fission yeast).